The primary structure comprises 146 residues: Hemoglobin subunit beta (146 aa).

V1 carries the post-translational modification N-acetylvaline. A Globin domain is found at 2–146 (HLTNEEKTAV…VATALAHKYH (145 aa)). S44 carries the phosphoserine modification. N6-acetyllysine is present on K59. H63 is a binding site for heme b. At K82 the chain carries N6-acetyllysine. H92 is a heme b binding site. C93 is subject to S-nitrosocysteine. K144 is modified (N6-acetyllysine).

Belongs to the globin family. In terms of assembly, heterotetramer of two alpha chains and two beta chains. Red blood cells.

Functionally, involved in oxygen transport from the lung to the various peripheral tissues. This chain is Hemoglobin subunit beta (HBB), found in Lyroderma lyra (Greater Asian false-vampire bat).